The chain runs to 687 residues: Putative secreted metallopeptidase (687 aa).

The N-terminal stretch at 1 to 22 (MLFTSTAVAALSGALLIQPALA) is a signal peptide. N-linked (GlcNAc...) asparagine glycans are attached at residues asparagine 54, asparagine 114, asparagine 252, asparagine 256, and asparagine 379.

It belongs to the peptidase M10B family.

Its subcellular location is the secreted. The protein is Putative secreted metallopeptidase of Arthroderma benhamiae (strain ATCC MYA-4681 / CBS 112371) (Trichophyton mentagrophytes).